A 202-amino-acid chain; its full sequence is Adenylyl-sulfate kinase (202 aa).

31–38 serves as a coordination point for ATP; it reads GLSASGKS. S105 (phosphoserine intermediate) is an active-site residue.

Belongs to the APS kinase family.

The enzyme catalyses adenosine 5'-phosphosulfate + ATP = 3'-phosphoadenylyl sulfate + ADP + H(+). Its pathway is sulfur metabolism; hydrogen sulfide biosynthesis; sulfite from sulfate: step 2/3. Its function is as follows. Catalyzes the synthesis of activated sulfate. The polypeptide is Adenylyl-sulfate kinase (MET14) (Saccharomyces pastorianus (Lager yeast)).